The following is a 469-amino-acid chain: Uronate isomerase (469 aa).

Belongs to the metallo-dependent hydrolases superfamily. Uronate isomerase family.

The catalysed reaction is D-glucuronate = D-fructuronate. It catalyses the reaction aldehydo-D-galacturonate = keto-D-tagaturonate. Its pathway is carbohydrate metabolism; pentose and glucuronate interconversion. The polypeptide is Uronate isomerase (Rhizobium meliloti (strain 1021) (Ensifer meliloti)).